A 325-amino-acid polypeptide reads, in one-letter code: ATPase GET3 (325 aa).

Residue 34–41 coordinates ATP; that stretch reads KGGVGKTT. Residue D63 is part of the active site. 2 residues coordinate ATP: E243 and N270. 2 residues coordinate Zn(2+): C281 and C284.

Belongs to the arsA ATPase family. Homodimer.

Its subcellular location is the cytoplasm. It is found in the endoplasmic reticulum. In terms of biological role, ATPase required for the post-translational delivery of tail-anchored (TA) proteins to the endoplasmic reticulum. Recognizes and selectively binds the transmembrane domain of TA proteins in the cytosol. This complex then targets to the endoplasmic reticulum by membrane-bound receptors, where the tail-anchored protein is released for insertion. This process is regulated by ATP binding and hydrolysis. ATP binding drives the homodimer towards the closed dimer state, facilitating recognition of newly synthesized TA membrane proteins. ATP hydrolysis is required for insertion. Subsequently, the homodimer reverts towards the open dimer state, lowering its affinity for the membrane-bound receptor, and returning it to the cytosol to initiate a new round of targeting. This Coccidioides posadasii (strain C735) (Valley fever fungus) protein is ATPase GET3.